We begin with the raw amino-acid sequence, 353 residues long: Dihydroorotate dehydrogenase (quinone) (353 aa).

FMN-binding positions include 66-70 (AGFDK) and T90. Substrate is bound at residue K70. Position 115–119 (115–119 (NRMGF)) interacts with substrate. Residues N143 and N176 each coordinate FMN. N176 contributes to the substrate binding site. The Nucleophile role is filled by S179. Residue N181 participates in substrate binding. FMN contacts are provided by K212 and T240. 241–242 (NT) is a substrate binding site. FMN is bound by residues G264, G293, and 314–315 (YT).

This sequence belongs to the dihydroorotate dehydrogenase family. Type 2 subfamily. In terms of assembly, monomer. The cofactor is FMN.

The protein resides in the cell membrane. The catalysed reaction is (S)-dihydroorotate + a quinone = orotate + a quinol. Its pathway is pyrimidine metabolism; UMP biosynthesis via de novo pathway; orotate from (S)-dihydroorotate (quinone route): step 1/1. Functionally, catalyzes the conversion of dihydroorotate to orotate with quinone as electron acceptor. The chain is Dihydroorotate dehydrogenase (quinone) from Mycolicibacterium vanbaalenii (strain DSM 7251 / JCM 13017 / BCRC 16820 / KCTC 9966 / NRRL B-24157 / PYR-1) (Mycobacterium vanbaalenii).